The following is an 89-amino-acid chain: UPF0367 protein P9515_01381 (89 aa).

The protein belongs to the UPF0367 family.

In Prochlorococcus marinus (strain MIT 9515), this protein is UPF0367 protein P9515_01381.